A 255-amino-acid polypeptide reads, in one-letter code: Type III pantothenate kinase (255 aa).

An ATP-binding site is contributed by 6-13; it reads DVGNTNTV. 108–111 contacts substrate; the sequence is GADR. The Proton acceptor role is filled by Asp110. A K(+)-binding site is contributed by Asp130. Thr133 serves as a coordination point for ATP. Residue Thr185 coordinates substrate.

It belongs to the type III pantothenate kinase family. Homodimer. NH4(+) serves as cofactor. It depends on K(+) as a cofactor.

The protein localises to the cytoplasm. The enzyme catalyses (R)-pantothenate + ATP = (R)-4'-phosphopantothenate + ADP + H(+). It participates in cofactor biosynthesis; coenzyme A biosynthesis; CoA from (R)-pantothenate: step 1/5. Functionally, catalyzes the phosphorylation of pantothenate (Pan), the first step in CoA biosynthesis. This chain is Type III pantothenate kinase, found in Hyphomonas neptunium (strain ATCC 15444).